A 318-amino-acid polypeptide reads, in one-letter code: Death effector domain-containing protein (318 aa).

One can recognise a DED domain in the interval 25–103 (SLHRMFDIVG…RHDLLPYVTL (79 aa)). Disordered stretches follow at residues 128–147 (PRAL…TVPP) and 160–191 (QMCS…KEKQ).

Interacts with CASP8, CASP10, KRT8, KRT18, CASP3 and FADD. Homodimerizes and heterodimerizes with DEDD2. Post-translationally, exists predominantly in a mono- or diubiquitinated form. Widely expressed with highest levels in testis.

It is found in the cytoplasm. The protein resides in the nucleus. Its subcellular location is the nucleolus. Functionally, a scaffold protein that directs CASP3 to certain substrates and facilitates their ordered degradation during apoptosis. May also play a role in mediating CASP3 cleavage of KRT18. Regulates degradation of intermediate filaments during apoptosis. May play a role in the general transcription machinery in the nucleus and might be an important regulator of the activity of GTF3C3. Inhibits DNA transcription in vitro. The polypeptide is Death effector domain-containing protein (DEDD) (Homo sapiens (Human)).